Consider the following 65-residue polypeptide: Small ribosomal subunit protein bS21 (65 aa).

This sequence belongs to the bacterial ribosomal protein bS21 family.

This Flavobacterium psychrophilum (strain ATCC 49511 / DSM 21280 / CIP 103535 / JIP02/86) protein is Small ribosomal subunit protein bS21.